A 508-amino-acid chain; its full sequence is 2,3-bisphosphoglycerate-independent phosphoglycerate mutase (508 aa).

2 residues coordinate Mn(2+): aspartate 9 and serine 59. Catalysis depends on serine 59, which acts as the Phosphoserine intermediate. Substrate-binding positions include histidine 120, 149-150, arginine 181, arginine 187, 254-257, and lysine 331; these read RD and RADR. Residues aspartate 398, histidine 402, aspartate 439, histidine 440, and histidine 456 each coordinate Mn(2+).

This sequence belongs to the BPG-independent phosphoglycerate mutase family. Mn(2+) serves as cofactor.

It catalyses the reaction (2R)-2-phosphoglycerate = (2R)-3-phosphoglycerate. The protein operates within carbohydrate degradation; glycolysis; pyruvate from D-glyceraldehyde 3-phosphate: step 3/5. Its function is as follows. Catalyzes the interconversion of 2-phosphoglycerate and 3-phosphoglycerate. This chain is 2,3-bisphosphoglycerate-independent phosphoglycerate mutase, found in Halobacterium salinarum (strain ATCC 700922 / JCM 11081 / NRC-1) (Halobacterium halobium).